The following is a 148-amino-acid chain: Hydrogenase expression/formation protein HoxO (148 aa).

The interval 128–148 is disordered; sequence IPVLSPESGTPSCSPMETSES. A compositionally biased stretch (polar residues) spans 134 to 148; it reads ESGTPSCSPMETSES.

It belongs to the HupG/HyaE family.

This is Hydrogenase expression/formation protein HoxO (hoxO) from Azotobacter vinelandii.